The following is a 79-amino-acid chain: Translational regulator CsrA (79 aa).

Belongs to the CsrA/RsmA family. Homodimer; the beta-strands of each monomer intercalate to form a hydrophobic core, while the alpha-helices form wings that extend away from the core.

The protein resides in the cytoplasm. A translational regulator that binds mRNA to regulate translation initiation and/or mRNA stability. Usually binds in the 5'-UTR at or near the Shine-Dalgarno sequence preventing ribosome-binding, thus repressing translation. Its main target seems to be the major flagellin gene, while its function is anatagonized by FliW. The sequence is that of Translational regulator CsrA from Maridesulfovibrio salexigens (strain ATCC 14822 / DSM 2638 / NCIMB 8403 / VKM B-1763) (Desulfovibrio salexigens).